The chain runs to 189 residues: Inner membrane-spanning protein YciB (189 aa).

Helical transmembrane passes span 23–43 (ILLA…FVWW), 54–74 (ITLA…DAAF), 82–102 (VNWL…KTLI), 120–140 (LNLA…YVFK), and 150–170 (FKLF…GVYL).

This sequence belongs to the YciB family.

It is found in the cell inner membrane. Plays a role in cell envelope biogenesis, maintenance of cell envelope integrity and membrane homeostasis. The polypeptide is Inner membrane-spanning protein YciB (Chromohalobacter salexigens (strain ATCC BAA-138 / DSM 3043 / CIP 106854 / NCIMB 13768 / 1H11)).